Reading from the N-terminus, the 181-residue chain is Large ribosomal subunit protein uL5c (181 aa).

Belongs to the universal ribosomal protein uL5 family. As to quaternary structure, part of the 50S ribosomal subunit; contacts the 5S rRNA.

It localises to the plastid. The protein localises to the chloroplast. Functionally, binds 5S rRNA, forms part of the central protuberance of the 50S subunit. In Heterosigma akashiwo (strain NIES-293 / 8280G21-1), this protein is Large ribosomal subunit protein uL5c (rpl5).